The chain runs to 286 residues: MKNSGLLNSVHVPAADPYYYLNTETLSLLNRIQRISQKHPVNVLVIGKQGCGKSSLVRQYAAVHHLPLATFQIGLLSEPGQLFGEYALENGETRYKQFLFPQAIQTPGCVIHLEEINRPEHPKALNMLFSILSDDRQVWMDELGLLKVADGVVFFATLNEGDEFVGTELLDPALRDRFYVTAMDFLPNDVEREVLQKKTGVTIAQAEEIIGVVNSLRASPELGVEVSTRKTLMIGEMIAAGGSLREAIAASLQTDRETLESVLLSLHVELGKTERGTTEYVLFTPR.

ATP is bound by residues 47-54 (GKQGCGKS) and 108-115 (GCVIHLEE).

This sequence belongs to the CbbQ/NirQ/NorQ/GpvN family.

Its function is as follows. May have a role in assembly and/or activation of benzylsuccinate synthase. The sequence is that of Putative chaperone BssE (bssE) from Thauera aromatica.